The following is a 158-amino-acid chain: UPF0260 protein RHECIAT_CH0001358 (158 aa).

This sequence belongs to the UPF0260 family.

The sequence is that of UPF0260 protein RHECIAT_CH0001358 from Rhizobium etli (strain CIAT 652).